We begin with the raw amino-acid sequence, 397 residues long: Phosphoglycerate kinase (397 aa).

Residues 21 to 23 (DFN), Arg-37, 60 to 63 (HLGR), Arg-119, and Arg-152 each bind substrate. ATP is bound by residues Lys-202, Gly-294, Glu-325, and 351–354 (GGDS).

The protein belongs to the phosphoglycerate kinase family. Monomer.

It localises to the cytoplasm. It carries out the reaction (2R)-3-phosphoglycerate + ATP = (2R)-3-phospho-glyceroyl phosphate + ADP. It participates in carbohydrate degradation; glycolysis; pyruvate from D-glyceraldehyde 3-phosphate: step 2/5. The protein is Phosphoglycerate kinase of Pseudothermotoga lettingae (strain ATCC BAA-301 / DSM 14385 / NBRC 107922 / TMO) (Thermotoga lettingae).